The primary structure comprises 508 residues: Lysine--tRNA ligase (508 aa).

Residues E418 and E425 each contribute to the Mg(2+) site.

Belongs to the class-II aminoacyl-tRNA synthetase family. Homodimer. The cofactor is Mg(2+).

The protein localises to the cytoplasm. The catalysed reaction is tRNA(Lys) + L-lysine + ATP = L-lysyl-tRNA(Lys) + AMP + diphosphate. This Burkholderia multivorans (strain ATCC 17616 / 249) protein is Lysine--tRNA ligase.